The following is a 100-amino-acid chain: NADH-quinone oxidoreductase subunit K (100 aa).

Helical transmembrane passes span 4–24 (LQHG…GLVI), 28–48 (LLFM…AFVV), and 60–80 (IMYI…LALL).

The protein belongs to the complex I subunit 4L family. In terms of assembly, NDH-1 is composed of 13 different subunits. Subunits NuoA, H, J, K, L, M, N constitute the membrane sector of the complex.

It is found in the cell inner membrane. The catalysed reaction is a quinone + NADH + 5 H(+)(in) = a quinol + NAD(+) + 4 H(+)(out). In terms of biological role, NDH-1 shuttles electrons from NADH, via FMN and iron-sulfur (Fe-S) centers, to quinones in the respiratory chain. The immediate electron acceptor for the enzyme in this species is believed to be ubiquinone. Couples the redox reaction to proton translocation (for every two electrons transferred, four hydrogen ions are translocated across the cytoplasmic membrane), and thus conserves the redox energy in a proton gradient. This chain is NADH-quinone oxidoreductase subunit K, found in Cronobacter sakazakii (strain ATCC BAA-894) (Enterobacter sakazakii).